Reading from the N-terminus, the 71-residue chain is MDLNLRHAVIQNIANNTKEQLEDTIVDAIQRGEEKYLPGLGVLFEEIWKHSSEQQKEEMLTTLEQAVKQHA.

It belongs to the SspI family.

It is found in the spore core. The protein is Small, acid-soluble spore protein I of Geobacillus sp. (strain WCH70).